Reading from the N-terminus, the 235-residue chain is Protein Thf1 (235 aa).

Residues 183 to 204 (DKLNKDLELYRSNLDKMAQALV) adopt a coiled-coil conformation. The segment at 213–235 (DRKKREQRKQQSTAPVAPPSSNE) is disordered. The span at 222 to 235 (QQSTAPVAPPSSNE) shows a compositional bias: polar residues.

This sequence belongs to the THF1 family.

In terms of biological role, may be involved in photosynthetic membrane biogenesis. The polypeptide is Protein Thf1 (Nostoc punctiforme (strain ATCC 29133 / PCC 73102)).